Consider the following 458-residue polypeptide: V-type sodium ATPase subunit B (458 aa).

It belongs to the ATPase alpha/beta chains family.

Functionally, involved in ATP-driven sodium extrusion. This chain is V-type sodium ATPase subunit B (ntpB), found in Enterococcus hirae (strain ATCC 9790 / DSM 20160 / JCM 8729 / LMG 6399 / NBRC 3181 / NCIMB 6459 / NCDO 1258 / NCTC 12367 / WDCM 00089 / R).